A 79-amino-acid polypeptide reads, in one-letter code: MKESVIEKTAMVFGQMNEPPGARMRVALTGLTLAEYFRDVEGQDVLLFIDNIFRFTQAGSEVSALLGRMPSAVGYQPTL.

This sequence belongs to the ATPase alpha/beta chains family. As to quaternary structure, F-type ATPases have 2 components, CF(1) - the catalytic core - and CF(0) - the membrane proton channel. CF(1) has five subunits: alpha(3), beta(3), gamma(1), delta(1), epsilon(1). CF(0) has three main subunits: a(1), b(2) and c(9-12). The alpha and beta chains form an alternating ring which encloses part of the gamma chain. CF(1) is attached to CF(0) by a central stalk formed by the gamma and epsilon chains, while a peripheral stalk is formed by the delta and b chains.

Its subcellular location is the cell membrane. The catalysed reaction is ATP + H2O + 4 H(+)(in) = ADP + phosphate + 5 H(+)(out). Its function is as follows. Produces ATP from ADP in the presence of a proton gradient across the membrane. The catalytic sites are hosted primarily by the beta subunits. This chain is ATP synthase subunit beta (atpD), found in Streptococcus downei (Streptococcus sobrinus).